We begin with the raw amino-acid sequence, 151 residues long: Small ribosomal subunit protein uS19 (151 aa).

It belongs to the universal ribosomal protein uS19 family.

The sequence is that of Small ribosomal subunit protein uS19 (RPS15) from Picea mariana (Black spruce).